The chain runs to 278 residues: RsbT co-antagonist protein RsbRD (278 aa).

One can recognise an STAS domain in the interval 160 to 271 (SAPIMPITDG…QSLAKALANK (112 aa)). Thr181 is subject to Phosphothreonine.

As to quaternary structure, probably present in the stressosome with RsbRA, RsbRB, RsbRC and RsbS. In terms of processing, phosphorylated by RsbT.

In terms of biological role, one of 4 functionally non-identical RsbR paralogs, it functions in the environmental signaling branch of the general stress response. Negative regulator of sigma-B activity. Non-phosphorylated RsbS binds to RsbT, preventing its association with RsbU. Requires any one of RsbRA, RsbRB, RsbRC or RsbRD to sequester RsbT. When RsbS and the RsbR paralog(s) are phosphorylated, they release RsbT, which can then bind and activate RsbU. This chain is RsbT co-antagonist protein RsbRD (rsbRD), found in Bacillus subtilis (strain 168).